Reading from the N-terminus, the 375-residue chain is Erythronate-4-phosphate dehydrogenase (375 aa).

Residues Ser-45 and Thr-66 each contribute to the substrate site. Positions 146 and 175 each coordinate NAD(+). Arg-208 is an active-site residue. NAD(+) is bound at residue Asp-232. Residue Glu-237 is part of the active site. His-254 functions as the Proton donor in the catalytic mechanism. Gly-257 is an NAD(+) binding site. Tyr-258 lines the substrate pocket.

The protein belongs to the D-isomer specific 2-hydroxyacid dehydrogenase family. PdxB subfamily. In terms of assembly, homodimer.

It is found in the cytoplasm. It catalyses the reaction 4-phospho-D-erythronate + NAD(+) = (R)-3-hydroxy-2-oxo-4-phosphooxybutanoate + NADH + H(+). Its pathway is cofactor biosynthesis; pyridoxine 5'-phosphate biosynthesis; pyridoxine 5'-phosphate from D-erythrose 4-phosphate: step 2/5. Functionally, catalyzes the oxidation of erythronate-4-phosphate to 3-hydroxy-2-oxo-4-phosphonooxybutanoate. The chain is Erythronate-4-phosphate dehydrogenase from Yersinia enterocolitica serotype O:8 / biotype 1B (strain NCTC 13174 / 8081).